Here is a 414-residue protein sequence, read N- to C-terminus: Ankyrin repeat domain-containing protein 10 (414 aa).

5 ANK repeats span residues 18–47 (TLRFPLHRACRDGDLPALCALLQSAPRSDL), 54–83 (YGWTPIHWAAHFGKLECLMQLVRAGASVNA), 88–117 (FAQTPAHIAAFGGHPQCLNWLIQVGANINK), 121–150 (VGETPIHKAARSGSVDSISALVAHGAQIDL), and 154–187 (SGLTAADLAHTQGFQECAQFLLNLQNCHLNRYYS). Residues 310–332 (GVTSPSRHRIHTSNGTEEPEKAM) form a disordered region.

The chain is Ankyrin repeat domain-containing protein 10 (ANKRD10) from Gallus gallus (Chicken).